Here is a 229-residue protein sequence, read N- to C-terminus: Type III pantothenate kinase (229 aa).

An ATP-binding site is contributed by 7 to 14 (DVGNSSVD). Substrate is bound by residues Tyr-78 and 85–88 (GTDR). The active-site Proton acceptor is Asp-87. Thr-110 provides a ligand contact to ATP. A substrate-binding site is contributed by Thr-161.

This sequence belongs to the type III pantothenate kinase family. Homodimer. NH4(+) is required as a cofactor. K(+) serves as cofactor.

The protein localises to the cytoplasm. The enzyme catalyses (R)-pantothenate + ATP = (R)-4'-phosphopantothenate + ADP + H(+). Its pathway is cofactor biosynthesis; coenzyme A biosynthesis; CoA from (R)-pantothenate: step 1/5. Functionally, catalyzes the phosphorylation of pantothenate (Pan), the first step in CoA biosynthesis. The chain is Type III pantothenate kinase from Aquifex aeolicus (strain VF5).